The primary structure comprises 210 residues: Riboflavin kinase (210 aa).

Residues 1–81 (MECKERRLIG…DLLRYFNIAS (81 aa)) form an H-T-H motif-like region. The segment at 82–210 (IRLIGRVISG…GDIVEVEILL (129 aa)) is riboflavin kinase. 91 to 96 (GLGEGA) serves as a coordination point for CDP. Thr-120 and Asn-122 together coordinate Mg(2+). FMN-binding residues include Thr-177 and Glu-185. 190 to 193 (VKLR) provides a ligand contact to CDP.

Belongs to the archaeal riboflavin kinase family. Mg(2+) serves as cofactor.

It catalyses the reaction riboflavin + CTP = CDP + FMN + H(+). It participates in cofactor biosynthesis; FMN biosynthesis; FMN from riboflavin (CTP route): step 1/1. Its function is as follows. Catalyzes the CTP-dependent phosphorylation of riboflavin (vitamin B2) to form flavin mononucleotide (FMN). This Pyrobaculum aerophilum (strain ATCC 51768 / DSM 7523 / JCM 9630 / CIP 104966 / NBRC 100827 / IM2) protein is Riboflavin kinase (ribK).